A 474-amino-acid polypeptide reads, in one-letter code: uncharacterized protein (474 aa).

Positions methionine 1 to leucine 14 are enriched in polar residues. Positions methionine 1–serine 137 are disordered. Serine 45 carries the phosphoserine modification. Composition is skewed to polar residues over residues arginine 73–serine 83, serine 97–proline 113, and serine 125–serine 137. Residue serine 169 is modified to Phosphoserine. 2 helical membrane-spanning segments follow: residues valine 210–glycine 230 and isoleucine 236–isoleucine 256.

It localises to the membrane. This is an uncharacterized protein from Arabidopsis thaliana (Mouse-ear cress).